The chain runs to 431 residues: Glutamate-1-semialdehyde 2,1-aminomutase (431 aa).

The residue at position 264 (Lys-264) is an N6-(pyridoxal phosphate)lysine.

This sequence belongs to the class-III pyridoxal-phosphate-dependent aminotransferase family. HemL subfamily. Homodimer. It depends on pyridoxal 5'-phosphate as a cofactor.

It is found in the cytoplasm. The catalysed reaction is (S)-4-amino-5-oxopentanoate = 5-aminolevulinate. It functions in the pathway porphyrin-containing compound metabolism; protoporphyrin-IX biosynthesis; 5-aminolevulinate from L-glutamyl-tRNA(Glu): step 2/2. In Clostridium beijerinckii (strain ATCC 51743 / NCIMB 8052) (Clostridium acetobutylicum), this protein is Glutamate-1-semialdehyde 2,1-aminomutase.